The sequence spans 196 residues: Protein hunchback (196 aa).

Disordered regions lie at residues 16–56 (SHHH…SHTN), 63–82 (LKQQ…QQPM), and 156–196 (LTPP…KYMA). A compositionally biased stretch (basic residues) spans 17–29 (HHHHHHHAHHSHH). 2 stretches are compositionally biased toward low complexity: residues 33–43 (SNSNASNSPHQ) and 65–80 (QQQQ…QQQQ). Residues 177 to 196 (EPEKEHDLMSNSSEDMKYMA) are compositionally biased toward basic and acidic residues.

Belongs to the hunchback C2H2-type zinc-finger protein family.

It localises to the nucleus. Gap class segmentation protein that controls development of head structures. In Drosophila adunca (Fruit fly), this protein is Protein hunchback (hb).